Here is a 156-residue protein sequence, read N- to C-terminus: Ribosomal RNA large subunit methyltransferase H (156 aa).

Residues Leu73, Gly104, and 123–128 contribute to the S-adenosyl-L-methionine site; that span reads LSSLTL.

This sequence belongs to the RNA methyltransferase RlmH family. As to quaternary structure, homodimer.

The protein resides in the cytoplasm. The enzyme catalyses pseudouridine(1915) in 23S rRNA + S-adenosyl-L-methionine = N(3)-methylpseudouridine(1915) in 23S rRNA + S-adenosyl-L-homocysteine + H(+). Specifically methylates the pseudouridine at position 1915 (m3Psi1915) in 23S rRNA. In Ralstonia nicotianae (strain ATCC BAA-1114 / GMI1000) (Ralstonia solanacearum), this protein is Ribosomal RNA large subunit methyltransferase H.